A 105-amino-acid polypeptide reads, in one-letter code: Serine protease inhibitor Kazal-type 8 (105 aa).

Positions 1–21 (MKVIFSVAVLVLASSVWTSLA) are cleaved as a signal peptide. Disulfide bonds link Cys-44/Cys-78, Cys-51/Cys-75, and Cys-64/Cys-96. Residues 44-98 (CIKNIQLCWILSYFKVSEPICGSNQVTYEGECHLCSGILYEDRTVIKVHDGPCEH) enclose the Kazal-like domain.

In terms of tissue distribution, expressed in epydiymis, in the cauda, corpus and caput.

It is found in the secreted. Its function is as follows. Probable serine protease inhibitor. The sequence is that of Serine protease inhibitor Kazal-type 8 (Spink8) from Mus musculus (Mouse).